Reading from the N-terminus, the 710-residue chain is Pentatricopeptide repeat-containing protein At5g39680 (710 aa).

N-acetylserine is present on S2. PPR repeat units lie at residues 35 to 64 (NELL…NQSS), 68 to 98 (DAYQ…MPER), 99 to 133 (NVVS…GESR), 135 to 169 (NEFV…GLIS), 170 to 200 (HEFV…LPYC), 201 to 235 (DLSV…DFVW), 236 to 270 (NNLT…GFNA), 271 to 301 (EVEA…THAQ), 302 to 336 (NIFL…EVPP), 337 to 371 (NEYT…GYRN), 372 to 402 (HVMV…MTFR), 403 to 437 (DIVT…GEIP), 438 to 473 (NRIT…DVQP), and 474 to 504 (DIQH…APIE). A type E motif region spans residues 509 to 584 (AWRTLLNACY…EPGVSWIGIR (76 aa)). A type E(+) motif region spans residues 585 to 615 (NQTHVFLAEDNQHPEITLIYAKVKEVMSKIK). Positions 616-710 (PLGYSPDVAG…DGQCSCCDYW (95 aa)) are type DYW motif.

It belongs to the PPR family. PCMP-H subfamily.

The polypeptide is Pentatricopeptide repeat-containing protein At5g39680 (EMB2744) (Arabidopsis thaliana (Mouse-ear cress)).